We begin with the raw amino-acid sequence, 336 residues long: 4-hydroxythreonine-4-phosphate dehydrogenase (336 aa).

Substrate is bound by residues histidine 142 and threonine 143. Residues histidine 172, histidine 217, and histidine 274 each coordinate a divalent metal cation. Positions 282, 291, and 300 each coordinate substrate.

This sequence belongs to the PdxA family. In terms of assembly, homodimer. Zn(2+) serves as cofactor. It depends on Mg(2+) as a cofactor. Requires Co(2+) as cofactor.

It localises to the cytoplasm. It catalyses the reaction 4-(phosphooxy)-L-threonine + NAD(+) = 3-amino-2-oxopropyl phosphate + CO2 + NADH. It participates in cofactor biosynthesis; pyridoxine 5'-phosphate biosynthesis; pyridoxine 5'-phosphate from D-erythrose 4-phosphate: step 4/5. Its function is as follows. Catalyzes the NAD(P)-dependent oxidation of 4-(phosphooxy)-L-threonine (HTP) into 2-amino-3-oxo-4-(phosphooxy)butyric acid which spontaneously decarboxylates to form 3-amino-2-oxopropyl phosphate (AHAP). This Trichlorobacter lovleyi (strain ATCC BAA-1151 / DSM 17278 / SZ) (Geobacter lovleyi) protein is 4-hydroxythreonine-4-phosphate dehydrogenase.